The following is a 148-amino-acid chain: CASP-like protein 1 (148 aa).

3 helical membrane passes run F31–L51, V74–G94, and I121–T141.

The protein belongs to the Casparian strip membrane proteins (CASP) family. Homodimer and heterodimers.

The protein localises to the cell membrane. The sequence is that of CASP-like protein 1 from Panax ginseng (Korean ginseng).